Consider the following 372-residue polypeptide: Peroxisomal biogenesis factor 3 (372 aa).

Residues 1-15 (MLRSMWNFLKRHKKK) are Cytoplasmic-facing. The tract at residues 1–45 (MLRSMWNFLKRHKKKCIFLGTVLGGVYILGKYGQKKIREIQEREA) is targeting to peroxisomes. A helical transmembrane segment spans residues 16-36 (CIFLGTVLGGVYILGKYGQKK). Residues 37–116 (IREIQEREAA…LKIISFTRSI (80 aa)) lie on the Peroxisomal side of the membrane. A helical membrane pass occupies residues 117–140 (VAVYSTCMLVVLLRVQLNIIGGYI). An interaction with PEX19 region spans residues 120-136 (YSTCMLVVLLRVQLNII). Residues 141–372 (YLDNATVGKN…AFSTPQQLEK (232 aa)) lie on the Cytoplasmic side of the membrane.

The protein belongs to the peroxin-3 family. In terms of assembly, interacts with PEX19. In terms of tissue distribution, identified in all tissues analyzed, with the strongest expression in liver and in testis.

It localises to the peroxisome membrane. Its function is as follows. Involved in peroxisome biosynthesis and integrity. Assembles membrane vesicles before the matrix proteins are translocated. As a docking factor for PEX19, is necessary for the import of peroxisomal membrane proteins in the peroxisomes. This chain is Peroxisomal biogenesis factor 3 (Pex3), found in Mus musculus (Mouse).